Consider the following 253-residue polypeptide: Serine/threonine-protein phosphatase 3 (253 aa).

The cofactor is Mn(2+). Phosphorylated by YegI.

It catalyses the reaction O-phospho-L-seryl-[protein] + H2O = L-seryl-[protein] + phosphate. The enzyme catalyses O-phospho-L-threonyl-[protein] + H2O = L-threonyl-[protein] + phosphate. Its activity is regulated as follows. Activity dramatically decreases in the presence of the general protein phosphatase inhibitor sodium phosphate. Slightly inhibited by sodium fluoride. Activity decreases in the presence of the metal chelator EDTA. In terms of biological role, PP2C-like phosphatase that can dephosphorylate YegI. In vitro, can hydrolyze p-nitrophenyl phosphate (pNPP) to p-nitrophenol. The protein is Serine/threonine-protein phosphatase 3 of Escherichia coli (strain K12).